The sequence spans 600 residues: Elongation factor 4 (600 aa).

The 183-residue stretch at 4-186 (SKIRNFSIIA…AIVEKIPSPS (183 aa)) folds into the tr-type G domain. Residues 16-21 (DHGKST) and 133-136 (NKID) each bind GTP.

The protein belongs to the TRAFAC class translation factor GTPase superfamily. Classic translation factor GTPase family. LepA subfamily.

It localises to the cell membrane. The catalysed reaction is GTP + H2O = GDP + phosphate + H(+). Required for accurate and efficient protein synthesis under certain stress conditions. May act as a fidelity factor of the translation reaction, by catalyzing a one-codon backward translocation of tRNAs on improperly translocated ribosomes. Back-translocation proceeds from a post-translocation (POST) complex to a pre-translocation (PRE) complex, thus giving elongation factor G a second chance to translocate the tRNAs correctly. Binds to ribosomes in a GTP-dependent manner. The sequence is that of Elongation factor 4 from Mycoplasma mycoides subsp. mycoides SC (strain CCUG 32753 / NCTC 10114 / PG1).